The sequence spans 325 residues: UDP-N-acetylglucosamine transporter (325 aa).

8 helical membrane-spanning segments follow: residues 8–24 (VSLGILVFQTTSLVLTM), 42–58 (AVVVAELLKIMACILLV), 138–154 (VYQWLSLVILMTGVAFV), 173–189 (FVGLMAVLTACFSSGFA), 209–225 (IQLGFFGSIFGLMGVYI), 246–262 (IVVVLQALGGLVIAAVI), 268–284 (ILKGFATSLSIILSTLI), and 295–311 (TSVFFLGAILVITATFL).

It belongs to the nucleotide-sugar transporter family. SLC35A subfamily. In terms of assembly, interacts with SLC35A2; the interaction is reduced in the presence of SLC35A4. Found in a complex with SLC35A2 and SLC35A4. Interacts with MGAT4B. In terms of processing, O-Glcnacylation regulates the stability of SLC35A3 and the specific complex formation with MGAT4B.

It localises to the golgi apparatus membrane. The enzyme catalyses UMP(out) + UDP-N-acetyl-alpha-D-glucosamine(in) = UMP(in) + UDP-N-acetyl-alpha-D-glucosamine(out). Transports diphosphate-N-acetylglucosamine (UDP-GlcNAc) from the cytosol into the lumen of the Golgi apparatus, functioning as an antiporter that exchanges UDP-N-acetyl-alpha-D-glucosamine for UMP. May supply UDP-GlcNAc as substrate for Golgi-resident glycosyltransferases that generate highly branched, multiantennary complex N-glycans and keratan sulfate. However, the exact role of SLC35A3 still needs to be elucidated, it could be a member of a catalytically more efficient multiprotein complex rather than function independently as a single transporter. In Homo sapiens (Human), this protein is UDP-N-acetylglucosamine transporter (SLC35A3).